The sequence spans 101 residues: Integration host factor subunit alpha (101 aa).

The protein belongs to the bacterial histone-like protein family. As to quaternary structure, heterodimer of an alpha and a beta chain.

Functionally, this protein is one of the two subunits of integration host factor, a specific DNA-binding protein that functions in genetic recombination as well as in transcriptional and translational control. The chain is Integration host factor subunit alpha from Dinoroseobacter shibae (strain DSM 16493 / NCIMB 14021 / DFL 12).